A 102-amino-acid chain; its full sequence is Small ribosomal subunit protein uS10 (102 aa).

It belongs to the universal ribosomal protein uS10 family. In terms of assembly, part of the 30S ribosomal subunit.

Functionally, involved in the binding of tRNA to the ribosomes. This chain is Small ribosomal subunit protein uS10, found in Geobacillus kaustophilus (strain HTA426).